The sequence spans 744 residues: Elongation factor G, mitochondrial (744 aa).

Residues methionine 1–phenylalanine 25 constitute a mitochondrion transit peptide. One can recognise a tr-type G domain in the interval glutamate 38–glycine 315. Residues alanine 47–threonine 54, aspartate 114–histidine 118, and asparagine 168–aspartate 171 each bind GTP.

The protein belongs to the TRAFAC class translation factor GTPase superfamily. Classic translation factor GTPase family. EF-G/EF-2 subfamily.

The protein resides in the mitochondrion. It participates in protein biosynthesis; polypeptide chain elongation. In terms of biological role, mitochondrial GTPase that catalyzes the GTP-dependent ribosomal translocation step during translation elongation. During this step, the ribosome changes from the pre-translocational (PRE) to the post-translocational (POST) state as the newly formed A-site-bound peptidyl-tRNA and P-site-bound deacylated tRNA move to the P and E sites, respectively. Catalyzes the coordinated movement of the two tRNA molecules, the mRNA and conformational changes in the ribosome. The chain is Elongation factor G, mitochondrial from Culex quinquefasciatus (Southern house mosquito).